The following is a 527-amino-acid chain: Phosphoenolpyruvate carboxykinase (ATP) (527 aa).

Residues Arg54, Tyr190, and Lys196 each coordinate substrate. ATP-binding positions include Lys196, His215, and 231-239 (GLSGTGKTT). 2 residues coordinate Mn(2+): Lys196 and His215. Asp252 contributes to the Mn(2+) binding site. Residues Glu280, Arg317, 436 to 437 (RI), and Thr442 contribute to the ATP site. Arg317 contributes to the substrate binding site.

This sequence belongs to the phosphoenolpyruvate carboxykinase (ATP) family. Mn(2+) is required as a cofactor.

The protein localises to the cytoplasm. It carries out the reaction oxaloacetate + ATP = phosphoenolpyruvate + ADP + CO2. It functions in the pathway carbohydrate biosynthesis; gluconeogenesis. Involved in the gluconeogenesis. Catalyzes the conversion of oxaloacetate (OAA) to phosphoenolpyruvate (PEP) through direct phosphoryl transfer between the nucleoside triphosphate and OAA. The chain is Phosphoenolpyruvate carboxykinase (ATP) from Oceanobacillus iheyensis (strain DSM 14371 / CIP 107618 / JCM 11309 / KCTC 3954 / HTE831).